Consider the following 240-residue polypeptide: Uridylate kinase (240 aa).

Residue 14-17 participates in ATP binding; sequence KLSG. Position 56 (G56) interacts with UMP. ATP contacts are provided by G57 and R61. Residues D76 and 137 to 144 each bind UMP; that span reads TGNPFFTT. T164, Y170, and D173 together coordinate ATP.

Belongs to the UMP kinase family. As to quaternary structure, homohexamer.

The protein localises to the cytoplasm. It carries out the reaction UMP + ATP = UDP + ADP. It functions in the pathway pyrimidine metabolism; CTP biosynthesis via de novo pathway; UDP from UMP (UMPK route): step 1/1. With respect to regulation, inhibited by UTP. Functionally, catalyzes the reversible phosphorylation of UMP to UDP. The polypeptide is Uridylate kinase (Paracidovorax citrulli (strain AAC00-1) (Acidovorax citrulli)).